The following is a 401-amino-acid chain: Insertion element ISM1 uncharacterized 48.3 kDa protein (401 aa).

In terms of biological role, this polypeptide is involved in transposition, and should therefore bind to nucleic acids. The polypeptide is Insertion element ISM1 uncharacterized 48.3 kDa protein (Methanobrevibacter smithii).